Here is a 359-residue protein sequence, read N- to C-terminus: Uroporphyrinogen decarboxylase (359 aa).

Substrate contacts are provided by residues 36 to 40 (RQAGR), Asp-85, Tyr-160, Ser-215, and His-338.

The protein belongs to the uroporphyrinogen decarboxylase family. As to quaternary structure, homodimer.

It is found in the cytoplasm. It catalyses the reaction uroporphyrinogen III + 4 H(+) = coproporphyrinogen III + 4 CO2. It participates in porphyrin-containing compound metabolism; protoporphyrin-IX biosynthesis; coproporphyrinogen-III from 5-aminolevulinate: step 4/4. Its function is as follows. Catalyzes the decarboxylation of four acetate groups of uroporphyrinogen-III to yield coproporphyrinogen-III. The sequence is that of Uroporphyrinogen decarboxylase from Corynebacterium efficiens (strain DSM 44549 / YS-314 / AJ 12310 / JCM 11189 / NBRC 100395).